The chain runs to 266 residues: Killer cell lectin-like receptor 8 (266 aa).

Residues 1–44 (MSEQEVTFPTMRFHKSSGLNSQVRLEGTQRSRKAGLRVCSVPWQ) are Cytoplasmic-facing. The chain crosses the membrane as a helical; Signal-anchor for type II membrane protein span at residues 45–66 (LIVIALGILCSLRLVIVAVFVT). At 67–266 (KFFQYSQHKQ…CGKKLDKFPD (200 aa)) the chain is on the extracellular side. 2 N-linked (GlcNAc...) asparagine glycosylation sites follow: Asn87 and Asn104. A C-type lectin domain is found at 143–261 (GVKYWFCYGT…PYYCICGKKL (119 aa)). 4 disulfide bridges follow: Cys149–Cys154, Cys167–Cys255, Cys171–Cys257, and Cys236–Cys249.

In terms of assembly, homodimer; disulfide-linked. Interacts with the adapter protein TYROBP/DAP12; the interaction leads to natural killer cell activation.

It localises to the cell membrane. Its function is as follows. Receptor on natural killer (NK) cells for class I MHC. The polypeptide is Killer cell lectin-like receptor 8 (Klra8) (Mus musculus (Mouse)).